A 100-amino-acid polypeptide reads, in one-letter code: Urease subunit gamma 1 (100 aa).

Belongs to the urease gamma subunit family. Heterotrimer of UreA (gamma), UreB (beta) and UreC (alpha) subunits. Three heterotrimers associate to form the active enzyme.

Its subcellular location is the cytoplasm. The enzyme catalyses urea + 2 H2O + H(+) = hydrogencarbonate + 2 NH4(+). It functions in the pathway nitrogen metabolism; urea degradation; CO(2) and NH(3) from urea (urease route): step 1/1. Functionally, disruption of the ure1 gene cluster suggests that it protects brucellae during their passage through the stomach. The major route of infection in human brucellosis is oral. The sequence is that of Urease subunit gamma 1 from Brucella abortus (strain 2308).